The sequence spans 37 residues: Alpha-conotoxin TxID (37 aa).

The propeptide occupies 1 to 21 (FDGRNAAGNDKMSALMALTTR). Disulfide bonds link C23–C29 and C24–C36. Cysteine amide is present on C36.

It belongs to the conotoxin A superfamily. Unmodified Met-32 is essential for toxin binding to rat alpha-3-beta-4/CHRNA3-CHRNB4 nAChR. An oxidation of this methionine provokes a 13.3-fold decrease in inhibitory potency (IC(50)=245 nM instead of 18 nM). Owing to its potent activity, derivatives of this toxin have a potential in the development of a novel drug. Unfortunately, the oxidation of the methionine is readily to happen during toxin synthesis and oxidation steps as well as under oxidative environment in vivo, which should still be considered to find a solution to this major drawback. As to expression, expressed by the venom duct.

Its subcellular location is the secreted. Alpha-conotoxins act on postsynaptic membranes, they bind to the nicotinic acetylcholine receptors (nAChR) and thus inhibit them. This toxin inhibits alpha-3-beta-4/CHRNA3-CHRNB4 (IC(50)=3.6-18.38 nM), alpha-6/alpha-3-beta-4 (CHRNA6/CHRNA3-CHRNB4) (IC(50)=33.9-94.1 nM), and alpha-2-beta-4/CHRNA2-CHRNB4 (IC(50)=4550 nM) nAChRs. The toxin competes with agonists in the orthosteric binding site of alpha-3-beta-4/CHRNA3-CHRNB4 and alpha-6-beta-4/CHRNA6-CHRNB4. This chain is Alpha-conotoxin TxID, found in Conus textile (Cloth-of-gold cone).